The chain runs to 292 residues: Sulfofructosephosphate aldolase (292 aa).

The Schiff-base intermediate with substrate role is filled by Lys-193.

The protein belongs to the aldolase LacD family. In terms of assembly, homotetramer.

It carries out the reaction 6-deoxy-6-sulfo-D-fructose 1-phosphate = (2S)-3-sulfolactaldehyde + dihydroxyacetone phosphate. In terms of biological role, cleaves 6-deoxy-6-sulfo-D-fructose 1-phosphate (SFP) to form dihydroxyacetone phosphate (DHAP) and 3-sulfolactaldehyde (SLA). This is Sulfofructosephosphate aldolase (yihT) from Escherichia coli O157:H7.